The following is a 233-amino-acid chain: MGQKVSPNVLRLGIVRDWENRWYAEKDQYVKWLDQDIKIRTALFKLLKDAAVSKIDIERTTKDLTLFIKTARPAIVLGQEGKNIEKIVLAVRKTVKNKKLIVNVRVIEIKSPDADATLVARWIGEQISNRASFRTVQKLAIKKALKAGAKGIKTAVSGRLGGVEMARTEGYLEGSVPLSTLRNNIDYALYEAPTTYGQIGVKVWINHGEVFKKERMNNSQIMAKPRTNKGGKR.

The KH type-2 domain occupies 39 to 108 (IRTALFKLLK…KLIVNVRVIE (70 aa)).

It belongs to the universal ribosomal protein uS3 family. In terms of assembly, part of the 30S ribosomal subunit. Forms a tight complex with proteins S10 and S14.

Functionally, binds the lower part of the 30S subunit head. Binds mRNA in the 70S ribosome, positioning it for translation. This is Small ribosomal subunit protein uS3 from Mycoplasma mycoides subsp. mycoides SC (strain CCUG 32753 / NCTC 10114 / PG1).